The chain runs to 130 residues: Capsid protein (130 aa).

Residues 32-105 (EWISSNSRSQ…FATNSDCELI (74 aa)) form a viral RNA-binding region.

The protein belongs to the Leviviricetes capsid protein family. In terms of assembly, homodimer. The capsid proteins form dimers that assemble by group of 5. Twelve such pentamers are linked together with free dimers. The homodimers binds to the viral RNA via an operator hairpin, but also to many other RNA sequences in the viral genome; this interaction probably shifts the virus from the replicative to the assembly phase and ensures specific encapsidation of the viral genome.

Its subcellular location is the virion. Capsid protein self-assembles to form an icosahedral capsid with a T=3 symmetry, about 26 nm in diameter, and consisting of 89 capsid proteins dimers (178 capsid proteins). Involved in viral genome encapsidation through the interaction between a capsid protein dimer and the multiple packaging signals present in the RNA genome. The capsid also contains 1 copy of the A2 maturation protein. In terms of biological role, acts as a translational repressor of viral replicase synthesis late in infection. This latter function is the result of capsid protein interaction with an RNA hairpin which contains the replicase ribosome-binding site. This Enterobacteria phage ZR (Bacteriophage ZR) protein is Capsid protein.